The primary structure comprises 387 residues: UDP-N-acetylglucosamine--N-acetylmuramyl-(pentapeptide) pyrophosphoryl-undecaprenol N-acetylglucosamine transferase (387 aa).

Residues 1–22 are disordered; sequence MSEHVRSAGPPQASTAPSGGSA. Residues 41–43, N158, R194, S222, I276, and Q321 each bind UDP-N-acetyl-alpha-D-glucosamine; that span reads TGG.

The protein belongs to the glycosyltransferase 28 family. MurG subfamily.

It is found in the cell inner membrane. The enzyme catalyses di-trans,octa-cis-undecaprenyl diphospho-N-acetyl-alpha-D-muramoyl-L-alanyl-D-glutamyl-meso-2,6-diaminopimeloyl-D-alanyl-D-alanine + UDP-N-acetyl-alpha-D-glucosamine = di-trans,octa-cis-undecaprenyl diphospho-[N-acetyl-alpha-D-glucosaminyl-(1-&gt;4)]-N-acetyl-alpha-D-muramoyl-L-alanyl-D-glutamyl-meso-2,6-diaminopimeloyl-D-alanyl-D-alanine + UDP + H(+). Its pathway is cell wall biogenesis; peptidoglycan biosynthesis. Cell wall formation. Catalyzes the transfer of a GlcNAc subunit on undecaprenyl-pyrophosphoryl-MurNAc-pentapeptide (lipid intermediate I) to form undecaprenyl-pyrophosphoryl-MurNAc-(pentapeptide)GlcNAc (lipid intermediate II). The polypeptide is UDP-N-acetylglucosamine--N-acetylmuramyl-(pentapeptide) pyrophosphoryl-undecaprenol N-acetylglucosamine transferase (Polaromonas sp. (strain JS666 / ATCC BAA-500)).